Consider the following 119-residue polypeptide: Large ribosomal subunit protein bL20 (119 aa).

This sequence belongs to the bacterial ribosomal protein bL20 family.

Its function is as follows. Binds directly to 23S ribosomal RNA and is necessary for the in vitro assembly process of the 50S ribosomal subunit. It is not involved in the protein synthesizing functions of that subunit. This is Large ribosomal subunit protein bL20 from Geobacillus sp. (strain WCH70).